We begin with the raw amino-acid sequence, 221 residues long: ATP-dependent Clp protease proteolytic subunit 1, mitochondrial (221 aa).

Residues 1-25 constitute a mitochondrion transit peptide; the sequence is MLRRLVTSSLSASRSMSASVQSRVG. S120 acts as the Nucleophile in catalysis. The active site involves H145.

The protein belongs to the peptidase S14 family. In terms of assembly, tetradecamer that assembles into a two heptameric rings with a central cavity. Expressed in the intestine.

The protein resides in the mitochondrion matrix. The catalysed reaction is Hydrolysis of proteins to small peptides in the presence of ATP and magnesium. alpha-casein is the usual test substrate. In the absence of ATP, only oligopeptides shorter than five residues are hydrolyzed (such as succinyl-Leu-Tyr-|-NHMec, and Leu-Tyr-Leu-|-Tyr-Trp, in which cleavage of the -Tyr-|-Leu- and -Tyr-|-Trp bonds also occurs).. Clp cleaves peptides in various proteins in a process that requires ATP hydrolysis. Clp may be responsible for a fairly general and central housekeeping function rather than for the degradation of specific substrates. This chain is ATP-dependent Clp protease proteolytic subunit 1, mitochondrial (clpp-1), found in Caenorhabditis elegans.